The sequence spans 534 residues: CTP synthase (534 aa).

The segment at 1-265 (MKYIIVTGGV…SNYLLKKLIL (265 aa)) is amidoligase domain. Ser-12 serves as a coordination point for CTP. Ser-12 serves as a coordination point for UTP. 13–18 (GLGKGI) contributes to the ATP binding site. Tyr-53 contributes to the L-glutamine binding site. Asp-70 is a binding site for ATP. Mg(2+) is bound by residues Asp-70 and Glu-140. Residues 147 to 149 (DIE), 186 to 191 (KTKPTQ), and Lys-222 contribute to the CTP site. UTP contacts are provided by residues 186-191 (KTKPTQ) and Lys-222. Positions 289–530 (NVAIVGKYTH…MGAMLKKSKE (242 aa)) constitute a Glutamine amidotransferase type-1 domain. An L-glutamine-binding site is contributed by Gly-352. Residue Cys-379 is the Nucleophile; for glutamine hydrolysis of the active site. Residues 380–383 (LGMQ), Glu-403, and Arg-460 contribute to the L-glutamine site. Residues His-503 and Glu-505 contribute to the active site.

This sequence belongs to the CTP synthase family. In terms of assembly, homotetramer.

It carries out the reaction UTP + L-glutamine + ATP + H2O = CTP + L-glutamate + ADP + phosphate + 2 H(+). The catalysed reaction is L-glutamine + H2O = L-glutamate + NH4(+). The enzyme catalyses UTP + NH4(+) + ATP = CTP + ADP + phosphate + 2 H(+). Its pathway is pyrimidine metabolism; CTP biosynthesis via de novo pathway; CTP from UDP: step 2/2. Its activity is regulated as follows. Allosterically activated by GTP, when glutamine is the substrate; GTP has no effect on the reaction when ammonia is the substrate. The allosteric effector GTP functions by stabilizing the protein conformation that binds the tetrahedral intermediate(s) formed during glutamine hydrolysis. Inhibited by the product CTP, via allosteric rather than competitive inhibition. In terms of biological role, catalyzes the ATP-dependent amination of UTP to CTP with either L-glutamine or ammonia as the source of nitrogen. Regulates intracellular CTP levels through interactions with the four ribonucleotide triphosphates. The sequence is that of CTP synthase from Methanococcoides burtonii (strain DSM 6242 / NBRC 107633 / OCM 468 / ACE-M).